A 548-amino-acid polypeptide reads, in one-letter code: Chaperonin GroEL 1 (548 aa).

Residues 30-33 (TLGP), Lys51, 87-91 (DGTTT), Gly415, 479-481 (NAA), and Asp495 contribute to the ATP site.

The protein belongs to the chaperonin (HSP60) family. As to quaternary structure, forms a cylinder of 14 subunits composed of two heptameric rings stacked back-to-back. Interacts with the co-chaperonin GroES.

The protein resides in the cytoplasm. It catalyses the reaction ATP + H2O + a folded polypeptide = ADP + phosphate + an unfolded polypeptide.. Functionally, together with its co-chaperonin GroES, plays an essential role in assisting protein folding. The GroEL-GroES system forms a nano-cage that allows encapsulation of the non-native substrate proteins and provides a physical environment optimized to promote and accelerate protein folding. This is Chaperonin GroEL 1 from Escherichia coli O1:K1 / APEC.